Reading from the N-terminus, the 164-residue chain is FMN reductase (NADH) RutF (164 aa).

The protein belongs to the non-flavoprotein flavin reductase family. RutF subfamily.

The catalysed reaction is FMNH2 + NAD(+) = FMN + NADH + 2 H(+). Its function is as follows. Catalyzes the reduction of FMN to FMNH2 which is used to reduce pyrimidine by RutA via the Rut pathway. The chain is FMN reductase (NADH) RutF from Enterobacter cloacae subsp. cloacae (strain ATCC 13047 / DSM 30054 / NBRC 13535 / NCTC 10005 / WDCM 00083 / NCDC 279-56).